Here is a 691-residue protein sequence, read N- to C-terminus: Elongation factor G (691 aa).

Positions 8–282 constitute a tr-type G domain; sequence EKTRNIGIMA…AVVDYLPSPV (275 aa). GTP-binding positions include 17–24, 81–85, and 135–138; these read AHIDAGKT, DTPGH, and NKMD.

This sequence belongs to the TRAFAC class translation factor GTPase superfamily. Classic translation factor GTPase family. EF-G/EF-2 subfamily.

It localises to the cytoplasm. Functionally, catalyzes the GTP-dependent ribosomal translocation step during translation elongation. During this step, the ribosome changes from the pre-translocational (PRE) to the post-translocational (POST) state as the newly formed A-site-bound peptidyl-tRNA and P-site-bound deacylated tRNA move to the P and E sites, respectively. Catalyzes the coordinated movement of the two tRNA molecules, the mRNA and conformational changes in the ribosome. The sequence is that of Elongation factor G from Caldicellulosiruptor bescii (strain ATCC BAA-1888 / DSM 6725 / KCTC 15123 / Z-1320) (Anaerocellum thermophilum).